The chain runs to 610 residues: Probable methyltransferase PMT22 (610 aa).

Residues Met-1–Lys-10 lie on the Cytoplasmic side of the membrane. The helical; Signal-anchor for type II membrane protein transmembrane segment at Leu-11–Asn-31 threads the bilayer. Residues Asp-32–Pro-610 lie on the Lumenal side of the membrane. Low complexity predominate over residues Ser-56 to Pro-69. The interval Ser-56 to Asp-81 is disordered. Asn-64, Asn-75, Asn-100, Asn-400, Asn-469, and Asn-546 each carry an N-linked (GlcNAc...) asparagine glycan.

This sequence belongs to the methyltransferase superfamily.

It localises to the endoplasmic reticulum membrane. This Arabidopsis thaliana (Mouse-ear cress) protein is Probable methyltransferase PMT22.